The following is a 243-amino-acid chain: 7-cyano-7-deazaguanine synthase (243 aa).

18 to 28 (FSGGQDSATCL) serves as a coordination point for ATP. Residues Cys-206, Cys-221, Cys-224, and Cys-227 each coordinate Zn(2+).

It belongs to the QueC family. The cofactor is Zn(2+).

The enzyme catalyses 7-carboxy-7-deazaguanine + NH4(+) + ATP = 7-cyano-7-deazaguanine + ADP + phosphate + H2O + H(+). Its pathway is purine metabolism; 7-cyano-7-deazaguanine biosynthesis. Catalyzes the ATP-dependent conversion of 7-carboxy-7-deazaguanine (CDG) to 7-cyano-7-deazaguanine (preQ(0)). The polypeptide is 7-cyano-7-deazaguanine synthase (Maricaulis maris (strain MCS10) (Caulobacter maris)).